Here is a 557-residue protein sequence, read N- to C-terminus: UvrABC system protein C (557 aa).

The 76-residue stretch at 14 to 89 folds into the GIY-YIG domain; the sequence is EEPGVYIFKN…IKKYRPKYNV (76 aa). Positions 194 to 229 constitute a UVR domain; the sequence is EEVFDYLKEKMETHSRMLDFENAAKYRDLLLNLSNV.

Belongs to the UvrC family. As to quaternary structure, interacts with UvrB in an incision complex.

It is found in the cytoplasm. In terms of biological role, the UvrABC repair system catalyzes the recognition and processing of DNA lesions. UvrC both incises the 5' and 3' sides of the lesion. The N-terminal half is responsible for the 3' incision and the C-terminal half is responsible for the 5' incision. This Thermotoga petrophila (strain ATCC BAA-488 / DSM 13995 / JCM 10881 / RKU-1) protein is UvrABC system protein C.